The chain runs to 373 residues: MLIIIRPSGEIALKSPRSRRNFEHTLANNIRSVIKEGKIWRSQGVLFLEVNDDNKNIEELSKVFGIASFSPVMSIKSYNNNLEDIINKAKEVFAEIVKGKIFSVRAKRIGSHNFTSLDVQRKVGEALYPFSRGVNLENPEVEVFIEIRNDVAYFYHKIIKGPKGLPVGVAGKTVVLFSGGIDSPVATWMMMKRGSIPVILNFNLGGSIHRKFVLEELSVLRKWSGGHKLKLFIVNGTDVLIKLSQIEKRNRVVMLKRVMYKVAERLCDKANAKSITTGESLSQVSSQTMTNLYVTEYGIKYPIFRPLIGFDKEEIVELARKIGTYQYSIKLPEYCAISTKARTSVELDEVLKDEENLNIDYEKVLENSEVIEI.

The THUMP domain occupies 54–158 (NKNIEELSKV…NDVAYFYHKI (105 aa)). Residues 176 to 177 (LF), 201 to 202 (NF), K256, G278, and Q287 each bind ATP.

Belongs to the ThiI family.

It localises to the cytoplasm. The catalysed reaction is [ThiI sulfur-carrier protein]-S-sulfanyl-L-cysteine + a uridine in tRNA + 2 reduced [2Fe-2S]-[ferredoxin] + ATP + H(+) = [ThiI sulfur-carrier protein]-L-cysteine + a 4-thiouridine in tRNA + 2 oxidized [2Fe-2S]-[ferredoxin] + AMP + diphosphate. The enzyme catalyses [ThiS sulfur-carrier protein]-C-terminal Gly-Gly-AMP + S-sulfanyl-L-cysteinyl-[cysteine desulfurase] + AH2 = [ThiS sulfur-carrier protein]-C-terminal-Gly-aminoethanethioate + L-cysteinyl-[cysteine desulfurase] + A + AMP + 2 H(+). Its pathway is cofactor biosynthesis; thiamine diphosphate biosynthesis. Functionally, catalyzes the ATP-dependent transfer of a sulfur to tRNA to produce 4-thiouridine in position 8 of tRNAs, which functions as a near-UV photosensor. Also catalyzes the transfer of sulfur to the sulfur carrier protein ThiS, forming ThiS-thiocarboxylate. This is a step in the synthesis of thiazole, in the thiamine biosynthesis pathway. The sulfur is donated as persulfide by IscS. The sequence is that of Probable tRNA sulfurtransferase from Saccharolobus islandicus (strain M.16.4 / Kamchatka #3) (Sulfolobus islandicus).